The following is a 281-amino-acid chain: NADPH-dependent 7-cyano-7-deazaguanine reductase (281 aa).

Residue 88–90 coordinates substrate; the sequence is IES. 90–91 contributes to the NADPH binding site; sequence SK. The Thioimide intermediate role is filled by C189. Residue D196 is the Proton donor of the active site. 228–229 is a substrate binding site; that stretch reads HE. NADPH is bound at residue 257–258; that stretch reads RG.

Belongs to the GTP cyclohydrolase I family. QueF type 2 subfamily. As to quaternary structure, homodimer.

It is found in the cytoplasm. It carries out the reaction 7-aminomethyl-7-carbaguanine + 2 NADP(+) = 7-cyano-7-deazaguanine + 2 NADPH + 3 H(+). It functions in the pathway tRNA modification; tRNA-queuosine biosynthesis. In terms of biological role, catalyzes the NADPH-dependent reduction of 7-cyano-7-deazaguanine (preQ0) to 7-aminomethyl-7-deazaguanine (preQ1). This Yersinia enterocolitica serotype O:8 / biotype 1B (strain NCTC 13174 / 8081) protein is NADPH-dependent 7-cyano-7-deazaguanine reductase.